A 127-amino-acid chain; its full sequence is Apolipoprotein C-IV (127 aa).

An N-terminal signal peptide occupies residues 1–27 (MSLLRNRLQDLPALCLCVLVLACIGAC). N-linked (GlcNAc...) asparagine glycosylation is present at Asn63.

Belongs to the apolipoprotein C4 family.

It localises to the secreted. Functionally, may participate in lipoprotein metabolism. This chain is Apolipoprotein C-IV (APOC4), found in Colobus guereza (Mantled guereza).